A 588-amino-acid polypeptide reads, in one-letter code: Myc box-dependent-interacting protein 1 (588 aa).

Residue alanine 2 is modified to N-acetylalanine. An interaction with BIN2 region spans residues 2-122 (AEMGSKGVTA…DYHQKLVDQA (121 aa)). Coiled-coil stretches lie at residues 15-42 (ASNVQKKLTRAQEKVLQKLGKADETKDE) and 193-274 (HLVA…EKQH). A BAR domain is found at 29–276 (VLQKLGKADE…LVSLEKQHGS (248 aa)). Residues 279–355 (FTVKAQPSDN…PKHTPSKEMK (77 aa)) are disordered. Phosphoserine occurs at positions 296, 298, and 304. Threonine 308 bears the Phosphothreonine mark. Phosphoserine is present on residues serine 324 and serine 332. The segment at 379–422 (FEAPGPFSEQASLLDLDFEPLPPVASPVKAPTPSGQSIPWDLWE) is clathrin-binding. The interval 448–484 (PSQTAEPGPAQPAEASEVVGGAQEPGETAASEATSSS) is disordered. The segment covering 474–484 (ETAASEATSSS) has biased composition (low complexity). Positions 515–588 (GFMFKVQAQH…FPENFTERVQ (74 aa)) constitute an SH3 domain.

In terms of assembly, heterodimer with AMPH. Binds SH3GLB1. Interacts (via SH3 domain) with DNM1. Interacts with SYNJ1. Interacts (via SH3 domain) with DNM2. Interacts with CLTC. Interacts with AP2A2. Interacts with AP2B1. Interacts with MYC (via N-terminal transactivation domain); the interaction requires the integrity of the conserved MYC box regions 1 and 2. Interacts with BIN2. Interacts with SNX4. Interacts (via BAR domain) with BACE1. Binds (via BAR domain) F-actin. In terms of processing, phosphorylated by protein kinase C. As to expression, isoform 1 is expressed mainly in the brain. Isoform 2 is widely expressed.

The protein localises to the nucleus. The protein resides in the cytoplasm. It localises to the endosome. Its subcellular location is the cell membrane. It is found in the sarcolemma. The protein localises to the T-tubule. Its function is as follows. Is a key player in the control of plasma membrane curvature, and membrane shaping and remodeling. Required in muscle cells for the formation of T-tubules, tubular invaginations of the plasma membrane that function in depolarization-contraction coupling. Required in muscle cells for the formation of T-tubules, tubular invaginations of the plasma membrane that function in depolarization-contraction coupling. Is a negative regulator of endocytosis. Is also involved in the regulation of intracellular vesicles sorting, modulation of BACE1 trafficking and the control of amyloid-beta production. In neuronal circuits, endocytosis regulation may influence the internalization of PHF-tau aggregates. May be involved in the regulation of MYC activity and the control cell proliferation. This is Myc box-dependent-interacting protein 1 (Bin1) from Mus musculus (Mouse).